Consider the following 810-residue polypeptide: MVMAYFVENFWGEKNSGFDVLYHNMKHGQISTKELADFVRERATIEEAYSRSMTKLAKSASNYSQLGTFAPVWDVFKTSTEKLANCHLDLVRKLQELIKEVQKYGEEQVKSHKKTKEEVAGTLEAVQTIQSTTQALQKSKENYNAKCVEQERLKKEGATQREIEKAAVKSKKATDTYKLYVEKYALAKADFEQKMTETAQKFQDIEETHLIHIKEVIGSLSNAIKEIHLQIGQVHEEFINNMANTTVESLIQKFAESKGTGKERPGLIEFEECDTASAVEGIKPRKRKTFALPGIIKKEKDAESVECPDADSLNIPDVDEEGYSIKPETNQNDTKENHFYSSSDSDSEDEEPKKYRIEIKPMHPNNSHHTMASLDELRVSIGNITLSPAISRHSPVQMNRNLSNEELTKSKPSAPPNERGTSDLLAWDPLFGPSLDSSSSSSLTSSSSARPTTPLSVGTIVPPPRPASRPKLTSGKLSGINEIPRPFSPPVTSNTSPPPAAPLARAESSSSISSSASLSAANTPTVGVSRGPSPVSLGNQDTLPVAVALTESVNAYFKGADPTKCIVKITGDMTMSFPSGIIKVFTSNPTPAVLCFRVKNISRLEQILPNAQLVFSDPSQCDSNTKDFWMNMQAVTVYLKKLSEQNPAASYYNVDVLKYQVSSNGIQSTPLNLATYWKCSASTTDLRVDYKYNPEAMVAPSVLSNIQVVVPVDGGVMNMQSLPPAIWNAEQMKAFWKLSSISEKSENGGSGSLRAKFDLSEGPSKPTTLAVQFLSEGSTLSGVDFELVGTGYRLSLIKKRFATGRYLADC.

An F-BAR domain is found at 3-250 (MAYFVENFWG…NMANTTVESL (248 aa)). The interval 3–274 (MAYFVENFWG…PGLIEFEECD (272 aa)) is mediates dimerization and binding to membranes enriched in Pi(4,5)-P2 and induces their tubulation. Positions 87-156 (HLDLVRKLQE…CVEQERLKKE (70 aa)) form a coiled coil. A Glycyl lysine isopeptide (Lys-Gly) (interchain with G-Cter in SUMO2) cross-link involves residue Lys-297. A disordered region spans residues 301-352 (DAESVECPDADSLNIPDVDEEGYSIKPETNQNDTKENHFYSSSDSDSEDEEP). The residue at position 312 (Ser-312) is a Phosphoserine. Thr-385 bears the Phosphothreonine mark. Phosphoserine occurs at positions 387, 394, and 403. The tract at residues 403-537 (SNEELTKSKP…VSRGPSPVSL (135 aa)) is disordered. The span at 433-456 (PSLDSSSSSSLTSSSSARPTTPLS) shows a compositional bias: low complexity. Ser-488, Ser-493, Ser-496, Ser-508, Ser-510, Ser-511, and Ser-533 each carry phosphoserine. Positions 502–521 (PLARAESSSSISSSASLSAA) are enriched in low complexity. The segment at 521–810 (ANTPTVGVSR…FATGRYLADC (290 aa)) is mediates interaction with DAB2, EPS15, EPS15R and ITSN1. Residues 542–809 (TLPVAVALTE…RFATGRYLAD (268 aa)) form the MHD domain.

Belongs to the FCHO family. Homodimer; disulfide-linked. May form homotetramer. Interacts with AP2A1. Interacts with EPS15, EPS15R, ITSN1 and ITSN2; recruit those scaffolding proteins which in turn may interact with the adaptor protein complex AP-2 at the plasma membrane. Interacts with DAB2 (via DPF motifs); mediates LDL receptor/LDLR endocytosis. In terms of processing, ubiquitinated. Mainly undergoes monoubiquitination but also polyubiquitination.

Its subcellular location is the membrane. It localises to the clathrin-coated pit. Its function is as follows. Functions in an early step of clathrin-mediated endocytosis. Has both a membrane binding/bending activity and the ability to recruit proteins essential to the formation of functional clathrin-coated pits. Has a lipid-binding activity with a preference for membranes enriched in phosphatidylserine and phosphoinositides (Pi(4,5) biphosphate) like the plasma membrane. Its membrane-bending activity might be important for the subsequent action of clathrin and adaptors in the formation of clathrin-coated vesicles. Involved in adaptor protein complex AP-2-dependent endocytosis of the transferrin receptor, it also functions in the AP-2-independent endocytosis of the LDL receptor. This is F-BAR domain only protein 2 (FCHO2) from Pongo abelii (Sumatran orangutan).